We begin with the raw amino-acid sequence, 227 residues long: UPF0758 protein Pcryo_2119 (227 aa).

Residues 102-224 form the MPN domain; it reads GLGRSQMVKD…TLSYAENSLP (123 aa). Residues His173, His175, and Asp186 each coordinate Zn(2+). The short motif at 173 to 186 is the JAMM motif element; that stretch reads HNHPHTDAKPSTAD.

It belongs to the UPF0758 family.

This is UPF0758 protein Pcryo_2119 from Psychrobacter cryohalolentis (strain ATCC BAA-1226 / DSM 17306 / VKM B-2378 / K5).